The following is a 319-amino-acid chain: MLFWLLVLLILCGFLWNYKRQLKIANITDKYIFITGCDTGFGNLAARTFDKKGFHVIAACLTESGSTALKAETSERLHTVLLDVTDPENVKRAAQWVKNQVGEKGLWGLINNAGILGVLAPNDWLTVEDYREPVEVNLFGLISVTLNMLPLVKKARGRIINVSSIGGRLAFGGGGYSPSKYAVEGFNDSLRRDMKAFGVHVACIEPGLFKTNLSDPEKTAEKKLAIWKHLSPDIKQQYGESYIEKSLEQLKGTASFVNVDLSLVVECMDHALTSLFPKTRYAAGKDAKTFWIPLSHMPAVLQDFLLLKQKVELANPRAV.

The signal sequence occupies residues 1–17; it reads MLFWLLVLLILCGFLWN. Residues 34–58 and Asp-83 contribute to the NAD(+) site; that span reads ITGC…HVIA. Position 164 (Ser-164) interacts with substrate. The Proton acceptor role is filled by Tyr-176. Lys-180 contacts NAD(+).

It belongs to the short-chain dehydrogenases/reductases (SDR) family. In terms of assembly, homotetramer.

The protein resides in the microsome membrane. It is found in the endoplasmic reticulum membrane. The catalysed reaction is 3beta-hydroxy-5alpha-pregnane-20-one + NAD(+) = 5alpha-pregnane-3,20-dione + NADH + H(+). The enzyme catalyses 17beta-hydroxy-5alpha-androstan-3-one + NAD(+) = 5alpha-androstan-3,17-dione + NADH + H(+). It carries out the reaction androsterone + NAD(+) = 5alpha-androstan-3,17-dione + NADH + H(+). It catalyses the reaction 5alpha-androstane-3alpha,17beta-diol + NAD(+) = 17beta-hydroxy-5alpha-androstan-3-one + NADH + H(+). The catalysed reaction is all-trans-retinol + NAD(+) = all-trans-retinal + NADH + H(+). The enzyme catalyses 3alpha-hydroxy-5alpha-pregnan-20-one + NAD(+) = 5alpha-pregnane-3,20-dione + NADH + H(+). 3-alpha-hydroxysteroid dehydrogenase that converts 3-alpha-tetrahydroprogesterone (allopregnanolone) to dihydroxyprogesterone and 3-alpha-androstanediol to dihydroxyprogesterone. Also plays a role in the biosynthesis of retinoic acid from retinaldehyde. Can utilize both NADH and NADPH. This chain is Dehydrogenase/reductase SDR family member 9 (DHRS9), found in Bos taurus (Bovine).